A 330-amino-acid polypeptide reads, in one-letter code: AP-1-like transcription factor YAP3 (330 aa).

The interval 114–150 (SYSNTNYFSKNNGISPSSRSPSVAHNENVPDDSKAKK) is disordered. The segment covering 121–138 (FSKNNGISPSSRSPSVAH) has biased composition (polar residues). A Phosphoserine modification is found at Ser-135. One can recognise a bZIP domain in the interval 144–207 (DDSKAKKKAQ…TEINAENRLL (64 aa)). Residues 147–168 (KAKKKAQNRAAQKAFRERKEAR) are basic motif. A leucine-zipper region spans residues 172 to 207 (LQDKLLESERNRQSLLKEIEELRKANTEINAENRLL).

It belongs to the bZIP family. YAP subfamily. Homodimer. Interacts with the C-terminal, cytoplasmic tail of the multidrug resistance ABC transporter PDR5.

It is found in the cytoplasm. The protein localises to the nucleus. Transcription activator involved in the regulation of genes expressed in response to environmental changes. When overexpressed it activates transcription of the multidrug resistance ABC transporter PDR5, thus conferring resistance to the fungicide fluconazole (FCZ) and cycloheximide. When overexpressed, it also confers, independent of PDR5, increased resistance to 4-nitroquinoline-N-oxide (4-NQO). Preferentially binds 5'-TTACTAA-3'. This is AP-1-like transcription factor YAP3 (YAP3) from Saccharomyces cerevisiae (strain ATCC 204508 / S288c) (Baker's yeast).